Here is a 410-residue protein sequence, read N- to C-terminus: Sprouty-related, EVH1 domain-containing protein 2 (410 aa).

The 118-residue stretch at 5-122 (THPDDDSYIV…RGVRKAIEDL (118 aa)) folds into the WH1 domain. A disordered region spans residues 127–171 (TTSSSTIHNEAELGDDDVFTTATDSSSNSSQKREPNTRTISSPTS). Over residues 146–156 (TTATDSSSNSS) the composition is skewed to polar residues. The KBD domain maps to 197 to 252 (SYPQVTFPEDDEEIVRINPREKIWMTGYEDYRHAPVRGKYLDSTEDADSYVRFAKG). 2 positions are modified to phosphotyrosine: Tyr224 and Tyr227. A disordered region spans residues 274–294 (DPKGNVIKTQPPRAKSRRRKE). In terms of domain architecture, SPR spans 300-408 (RCVYCRDMFN…CRCCGGKHKA (109 aa)).

Homodimer and heterodimer. Able to interact with SPRED1 to form heterodimers. Interacts with RAS. May interact with ZDHHC13 (via ANK repeats) and ZDHHC17 (via ANK repeats). Interacts with TESK1. Interacts with NF1. Post-translationally, phosphorylated on serine and threonine residues. Phosphorylated on tyrosine. Phosphorylation of Tyr-224 and Tyr-227 are required for ubiquitination. Ubiquitinated; leading to degradation by the proteasome. In terms of tissue distribution, expressed in the eye, with higher expression in lens epithelium than in lens fiber cells at postnatal day 15.

The protein resides in the cell membrane. Its subcellular location is the cytoplasmic vesicle. It localises to the secretory vesicle membrane. It is found in the cytoplasm. Functionally, negatively regulates Ras signaling pathways and downstream activation of MAP kinases. Recruits and translocates NF1 to the cell membrane, thereby enabling NF1-dependent hydrolysis of active GTP-bound Ras to inactive GDP-bound Ras. Inhibits fibroblast growth factor (FGF)-induced retinal lens fiber differentiation, probably by inhibiting FGF-mediated phosphorylation of ERK1/2. Inhibits TGFB-induced epithelial-to-mesenchymal transition in lens epithelial cells. This Rattus norvegicus (Rat) protein is Sprouty-related, EVH1 domain-containing protein 2 (Spred2).